Reading from the N-terminus, the 504-residue chain is Glucosaminyl-phosphatidylinositol-acyltransferase PIGW (504 aa).

Topologically, residues M1 to E21 are lumenal. N15 carries N-linked (GlcNAc...) asparagine glycosylation. The chain crosses the membrane as a helical span at residues I22–F42. The Cytoplasmic segment spans residues S43–R56. Residues F57–W75 traverse the membrane as a helical segment. The Lumenal portion of the chain corresponds to A76–L81. A helical membrane pass occupies residues E82 to Y98. Over R99–C131 the chain is Cytoplasmic. Residues F132–F152 form a helical membrane-spanning segment. Over P153 to Y162 the chain is Lumenal. A helical membrane pass occupies residues G163–L183. The Cytoplasmic segment spans residues E184–S202. The helical transmembrane segment at L203–I223 threads the bilayer. Residues G224–N237 lie on the Lumenal side of the membrane. Residues F238–L258 form a helical membrane-spanning segment. At N259–K260 the chain is on the cytoplasmic side. Residues S261 to L281 form a helical membrane-spanning segment. Residues K282–G305 lie on the Lumenal side of the membrane. The chain crosses the membrane as a helical span at residues I306–M326. Over H327–K338 the chain is Cytoplasmic. A helical transmembrane segment spans residues V339–V359. At N360–N370 the chain is on the lumenal side. The chain crosses the membrane as a helical span at residues L371–G391. Over D392–Q448 the chain is Cytoplasmic. S416 is subject to Phosphoserine. Residues L449–L469 traverse the membrane as a helical segment. Topologically, residues H470 to T473 are lumenal. Residues L474 to L494 traverse the membrane as a helical segment. The Cytoplasmic segment spans residues Y495 to W504.

This sequence belongs to the PIGW family.

The protein localises to the endoplasmic reticulum membrane. Its pathway is glycolipid biosynthesis; glycosylphosphatidylinositol-anchor biosynthesis. Its function is as follows. Acyltransferase that catalyzes the acyl transfer from an acyl-CoA at the 2-OH position of the inositol ring of glucosaminyl phosphatidylinositol (GlcN-PI) to generate glucosaminyl acyl phosphatidylinositol (GlcN-(acyl)PI) and participates in the fourth step of GPI-anchor biosynthesis. Required for the transport of GPI-anchored proteins to the plasma membrane. Acetylation during GPI-anchor biosynthesis is not essential for the subsequent mannosylation and is usually removed soon after the attachment of GPIs to proteins. This chain is Glucosaminyl-phosphatidylinositol-acyltransferase PIGW, found in Homo sapiens (Human).